The sequence spans 451 residues: MASATEDPVLERYFKGHKAAITSLDLSPNGKQLATASWDTFLMLWNFKPHARAYRYVGHKDVVTSVQFSPHGNLLASASRDRTVRLWIPDKRGKFSEFKAHTAPVRSVDFSADGQFLATASEDKSIKVWSMYRQRFLYSLYRHTHWVRCAKFSPDGRLIVSCSEDKTIKIWDTTNKQCVNNFSDSVGFANFVDFNPSGTCIASAGSDQTVKVWDVRVNKLLQHYQVHSGGVNCISFHPSDNYLVTASSDGTLKILDLLEGRLIYTLQGHTGPVFTVSFSKGGELFASGGADTQVLLWRTNFDELHCKGLNKRNLKRLHFDSPPHLLDIYPRTPHPHEEKVETVETTETSGRTLPDKGEEACGYFLNPSLMSPECSPTTTKKKTEDMSDLPSESQRSIPLAVTDALEHIMEQLNVLTQTVSILEQRLTLTEDKLKDCLENQQKLFSAVQQKS.

WD repeat units lie at residues glycine 16–arginine 55, glycine 58–lysine 99, histidine 101–serine 139, arginine 142–asparagine 181, serine 183–histidine 223, valine 226–threonine 265, and glycine 268–lysine 307. Serine 321 is modified (phosphoserine). Residues proline 372–glutamine 394 are disordered. Residues alanine 404–leucine 443 adopt a coiled-coil conformation.

This sequence belongs to the WD repeat POC1 family. Interacts with POC1A. Interacts with FAM161A. Interacts with CEP44; the interaction is direct and recruits POC1B to centriolar microtubules. Forms a microtubule-associated complex with POC5, CETN2 and FAM161A. Interacts with CCDC15. Post-translationally, phosphorylated in mitotic cells that may be mediated by CDK1.

Its subcellular location is the cytoplasm. The protein localises to the cytoskeleton. It is found in the microtubule organizing center. It localises to the centrosome. The protein resides in the centriole. Its subcellular location is the cilium basal body. The protein localises to the spindle pole. Plays an important role in centriole assembly and/or stability and ciliogenesis. Involved in early steps of centriole duplication, as well as in the later steps of centriole length control. Acts in concert with POC1A to ensure centriole integrity and proper mitotic spindle formation. Required for primary cilia formation, ciliary length and also cell proliferation. Required for retinal integrity. Acts as a positive regulator of centriole elongation. The protein is POC1 centriolar protein homolog B (POC1B) of Pongo abelii (Sumatran orangutan).